The chain runs to 772 residues: DnaJ homolog subfamily C member 16 (772 aa).

Residues 1-25 form the signal peptide; sequence MELKRLGVSWRFLMVLVLILQSLSA. The Cytoplasmic portion of the chain corresponds to 26-533; it reads LDFDPYRVLG…ESLLHSNWRE (508 aa). The region spanning 29–93 is the J domain; sequence DPYRVLGVSR…EKRTNYDHYG (65 aa). A Thioredoxin domain is found at 119–245; sequence FDESFFHFPF…LRQFVESLLP (127 aa). The helical; Anchor for type IV membrane protein transmembrane segment at 534–554 threads the bilayer; it reads MMPLLSLIFSALFILFGTVMV. Residues 555 to 772 lie on the Extracellular side of the membrane; the sequence is QAFSDSNEER…FYIPSWPELD (218 aa). The disordered stretch occupies residues 560–591; it reads SNEERESHPADKEEVPEKAGKTEPSFTKESSS. Over residues 561 to 580 the composition is skewed to basic and acidic residues; the sequence is NEERESHPADKEEVPEKAGK. N629 carries N-linked (GlcNAc...) asparagine glycosylation.

Its subcellular location is the endoplasmic reticulum membrane. Functionally, plays an important role in regulating the size of autophagosomes during the formation process. The polypeptide is DnaJ homolog subfamily C member 16 (Dnajc16) (Mus musculus (Mouse)).